The following is a 473-amino-acid chain: Reticulon-4 receptor (473 aa).

Residues 1-26 (MKRASSGGSRLLAWVLWLQAWRVATP) form the signal peptide. Cystine bridges form between Cys-27–Cys-33 and Cys-31–Cys-43. In terms of domain architecture, LRRNT spans 27-57 (CPGACVCYNEPKVTTSCPQQGLQAVPTGIPA). LRR repeat units lie at residues 58 to 79 (SSQR…SFQS), 82 to 103 (NLTI…AFTG), 106 to 128 (LLEQ…TFHG), 131 to 152 (HLHT…LFRG), 155 to 176 (ALQY…TFRD), 179 to 200 (NLTH…AFRG), 203 to 224 (SLDR…AFRD), and 227 to 248 (RLMT…VLMP). N-linked (GlcNAc...) asparagine glycosylation occurs at Asn-82. Asn-179 carries N-linked (GlcNAc...) asparagine glycosylation. In terms of domain architecture, LRRCT spans 260-311 (NPWVCDCRARPLWAWLQKFRGSSSEVPCNLPQRLADRDLKRLAASDLEGCAV). 3 disulfide bridges follow: Cys-264/Cys-287, Cys-266/Cys-335, and Cys-309/Cys-336. Positions 346 to 446 (VLEPGRPASA…GASGTGDAEG (101 aa)) are disordered. The N-linked (GlcNAc...) asparagine glycan is linked to Asn-372. Residues 413 to 429 (PRRRPGCSRKNRTRSHC) are compositionally biased toward basic residues. Over residues 434-445 (AGSGASGTGDAE) the composition is skewed to gly residues. Ser-447 is lipidated: GPI-anchor amidated serine. Positions 448-473 (GALPALACSLAPLGLALVLWTVLGPC) are cleaved as a propeptide — removed in mature form.

The protein belongs to the Nogo receptor family. Homodimer. Interacts with MAG. Interacts with RTN4. Interacts with NGFR. Interacts with LINGO1. Interacts with KIAA0319L. Interacts with OLFM1; this inhibits interaction with LINGO1 and NGFR. Interacts with OMG. Post-translationally, N-glycosylated. O-glycosylated. Contains terminal sialic acid groups on its glycan chains. In terms of tissue distribution, detected in embryonic hippocampus neurons. Detected in brain (at protein level). Detected in neurons in the neocortex, in hippocampus, dorsal thalamus, cerebellum granule cell layer and the mitral cell layer in the olfactory bulb. Detected in brain, dorsal root ganglion and heart.

Its subcellular location is the cell membrane. It localises to the membrane raft. It is found in the cell projection. The protein resides in the dendrite. The protein localises to the axon. Its subcellular location is the perikaryon. In terms of biological role, receptor for RTN4, OMG and MAG. Functions as a receptor for the sialylated gangliosides GT1b and GM1. Besides, functions as a receptor for chondroitin sulfate proteoglycans. Can also bind heparin. Intracellular signaling cascades are triggered via the coreceptor NGFR. Signaling mediates activation of Rho and downstream reorganization of the actin cytoskeleton. Mediates axonal growth inhibition. Mediates axonal growth inhibition and plays a role in regulating axon regeneration and neuronal plasticity in the adult central nervous system. Plays a role in postnatal brain development. Required for normal axon migration across the brain midline and normal formation of the corpus callosum. Protects motoneurons against apoptosis; protection against apoptosis is probably mediated via interaction with MAG. Acts in conjunction with RTN4 and LINGO1 in regulating neuronal precursor cell motility during cortical development. Like other family members, plays a role in restricting the number dendritic spines and the number of synapses that are formed during brain development. The sequence is that of Reticulon-4 receptor (Rtn4r) from Mus musculus (Mouse).